A 360-amino-acid polypeptide reads, in one-letter code: Aminomethyltransferase (360 aa).

Belongs to the GcvT family. In terms of assembly, the glycine cleavage system is composed of four proteins: P, T, L and H.

The enzyme catalyses N(6)-[(R)-S(8)-aminomethyldihydrolipoyl]-L-lysyl-[protein] + (6S)-5,6,7,8-tetrahydrofolate = N(6)-[(R)-dihydrolipoyl]-L-lysyl-[protein] + (6R)-5,10-methylene-5,6,7,8-tetrahydrofolate + NH4(+). Functionally, the glycine cleavage system catalyzes the degradation of glycine. This chain is Aminomethyltransferase, found in Flavobacterium psychrophilum (strain ATCC 49511 / DSM 21280 / CIP 103535 / JIP02/86).